Consider the following 866-residue polypeptide: Leucine--tRNA ligase (866 aa).

Residues proline 42–histidine 52 carry the 'HIGH' region motif. The short motif at lysine 630–serine 634 is the 'KMSKS' region element. ATP is bound at residue lysine 633.

This sequence belongs to the class-I aminoacyl-tRNA synthetase family.

It is found in the cytoplasm. It carries out the reaction tRNA(Leu) + L-leucine + ATP = L-leucyl-tRNA(Leu) + AMP + diphosphate. The sequence is that of Leucine--tRNA ligase from Laribacter hongkongensis (strain HLHK9).